Reading from the N-terminus, the 389-residue chain is Indole-3-acetate monooxygenase (389 aa).

This sequence belongs to the HpaH/HsaA monooxygenase family.

It catalyses the reaction (indol-3-yl)acetate + NADH + O2 + H(+) = 2-hydroxy-(1H-indol-3-yl)acetate + NAD(+) + H2O. It carries out the reaction indole + NADH + O2 + H(+) = indoxyl + NAD(+) + H2O. Functionally, involved in the degradation of the plant hormone indole-3-acetic acid (IAA). Catalyzes the first step of the pathway, the conversion of IAA to 2-hydroxy-IAA (2-OH-IAA). Can also convert indole to indoxyl, which spontaneously dimerizes in the presence of oxygen to form the blue pigment indigo. The sequence is that of Indole-3-acetate monooxygenase from Pseudomonas putida (Arthrobacter siderocapsulatus).